A 216-amino-acid chain; its full sequence is Pyridoxine/pyridoxamine 5'-phosphate oxidase (216 aa).

Residues 12–15 (RREY) and Lys70 contribute to the substrate site. FMN is bound by residues 65–70 (RLVLLK), 80–81 (YT), Arg86, Lys87, and Gln109. 3 residues coordinate substrate: Tyr127, Arg131, and Ser135. Residues 144 to 145 (QS) and Trp189 each bind FMN. Residue 195–197 (RLH) participates in substrate binding. Arg199 provides a ligand contact to FMN.

The protein belongs to the pyridoxamine 5'-phosphate oxidase family. Homodimer. The cofactor is FMN.

The enzyme catalyses pyridoxamine 5'-phosphate + O2 + H2O = pyridoxal 5'-phosphate + H2O2 + NH4(+). The catalysed reaction is pyridoxine 5'-phosphate + O2 = pyridoxal 5'-phosphate + H2O2. The protein operates within cofactor metabolism; pyridoxal 5'-phosphate salvage; pyridoxal 5'-phosphate from pyridoxamine 5'-phosphate: step 1/1. It participates in cofactor metabolism; pyridoxal 5'-phosphate salvage; pyridoxal 5'-phosphate from pyridoxine 5'-phosphate: step 1/1. Catalyzes the oxidation of either pyridoxine 5'-phosphate (PNP) or pyridoxamine 5'-phosphate (PMP) into pyridoxal 5'-phosphate (PLP). This Baumannia cicadellinicola subsp. Homalodisca coagulata protein is Pyridoxine/pyridoxamine 5'-phosphate oxidase.